Consider the following 261-residue polypeptide: Hemin import ATP-binding protein HmuV (261 aa).

The ABC transporter domain maps to 7–243; it reads LRGQNLSLQF…EIIDAVYGYK (237 aa). 39-46 serves as a coordination point for ATP; sequence GPNGAGKS.

This sequence belongs to the ABC transporter superfamily. Heme (hemin) importer (TC 3.A.1.14.5) family. In terms of assembly, the complex is composed of two ATP-binding proteins (HmuV), two transmembrane proteins (HmuU) and a solute-binding protein (HmuT).

Its subcellular location is the cell inner membrane. Part of the ABC transporter complex HmuTUV involved in hemin import. Responsible for energy coupling to the transport system. The sequence is that of Hemin import ATP-binding protein HmuV from Vibrio vulnificus (strain CMCP6).